Reading from the N-terminus, the 253-residue chain is 3-deoxy-manno-octulosonate cytidylyltransferase (253 aa).

It belongs to the KdsB family.

Its subcellular location is the cytoplasm. The catalysed reaction is 3-deoxy-alpha-D-manno-oct-2-ulosonate + CTP = CMP-3-deoxy-beta-D-manno-octulosonate + diphosphate. It participates in nucleotide-sugar biosynthesis; CMP-3-deoxy-D-manno-octulosonate biosynthesis; CMP-3-deoxy-D-manno-octulosonate from 3-deoxy-D-manno-octulosonate and CTP: step 1/1. The protein operates within bacterial outer membrane biogenesis; lipopolysaccharide biosynthesis. Functionally, activates KDO (a required 8-carbon sugar) for incorporation into bacterial lipopolysaccharide in Gram-negative bacteria. The protein is 3-deoxy-manno-octulosonate cytidylyltransferase of Acinetobacter baumannii (strain ATCC 17978 / DSM 105126 / CIP 53.77 / LMG 1025 / NCDC KC755 / 5377).